We begin with the raw amino-acid sequence, 847 residues long: Alanine--tRNA ligase (847 aa).

4 residues coordinate Zn(2+): histidine 554, histidine 558, cysteine 656, and histidine 660.

It belongs to the class-II aminoacyl-tRNA synthetase family. Zn(2+) serves as cofactor.

It localises to the cytoplasm. The enzyme catalyses tRNA(Ala) + L-alanine + ATP = L-alanyl-tRNA(Ala) + AMP + diphosphate. Functionally, catalyzes the attachment of alanine to tRNA(Ala) in a two-step reaction: alanine is first activated by ATP to form Ala-AMP and then transferred to the acceptor end of tRNA(Ala). Also edits incorrectly charged Ser-tRNA(Ala) and Gly-tRNA(Ala) via its editing domain. The sequence is that of Alanine--tRNA ligase from Helicobacter pylori (strain ATCC 700392 / 26695) (Campylobacter pylori).